The sequence spans 262 residues: Membrane protein US15 (262 aa).

7 helical membrane passes run 46 to 66 (GAVG…CYAA), 77 to 97 (CLTE…VIFI), 108 to 128 (IGVL…ICLC), 133 to 153 (LVIS…GVAL), 163 to 183 (QIVV…VVIL), 186 to 206 (GWSW…CLAV), and 226 to 246 (LLAA…VLRI).

Belongs to the HHV-5 US12 protein family.

It is found in the host membrane. This chain is Membrane protein US15 (US15), found in Human cytomegalovirus (strain Merlin) (HHV-5).